Consider the following 279-residue polypeptide: Dihydropteroate synthase type-1 (279 aa).

The Pterin-binding domain maps to 1 to 258 (MVTVFGILNL…APGDLRSAIT (258 aa)). Position 9 (N9) interacts with Mg(2+). (7,8-dihydropterin-6-yl)methyl diphosphate contacts are provided by residues D82, N101, D173, K212, and 246 to 248 (RTH).

The protein belongs to the DHPS family. Homodimer or homotrimer. Mg(2+) serves as cofactor.

The catalysed reaction is (7,8-dihydropterin-6-yl)methyl diphosphate + 4-aminobenzoate = 7,8-dihydropteroate + diphosphate. Its pathway is cofactor biosynthesis; tetrahydrofolate biosynthesis; 7,8-dihydrofolate from 2-amino-4-hydroxy-6-hydroxymethyl-7,8-dihydropteridine diphosphate and 4-aminobenzoate: step 1/2. Its function is as follows. Catalyzes the condensation of para-aminobenzoate (pABA) with 6-hydroxymethyl-7,8-dihydropterin diphosphate (DHPt-PP) to form 7,8-dihydropteroate (H2Pte), the immediate precursor of folate derivatives. The chain is Dihydropteroate synthase type-1 (sulI) from Corynebacterium glutamicum (Brevibacterium saccharolyticum).